The chain runs to 1247 residues: ABC transporter B family member 14 (1247 aa).

One can recognise an ABC transmembrane type-1 1 domain in the interval 48–337 (MFLGGLGTCI…AVPSLSAISK (290 aa)). Transmembrane regions (helical) follow at residues 49–69 (FLGGLGTCIHGGTLPLFFVFF), 95–115 (LYLVYLGLVNLVSAWIGVACW), 172–192 (HVLRYLCQFIAGFVIGFLSVW), 196–216 (LLTLGVVPLIAIAGGGYAIVM), 277–297 (LGVGLTYSLLFCAWALLFWYA), and 315–335 (ILNVIYSGFALGQAVPSLSAI). Asparagine 362 and asparagine 392 each carry an N-linked (GlcNAc...) asparagine glycan. An ABC transporter 1 domain is found at 373-608 (IEFCGVSFAY…GGDYATLVNC (236 aa)). 407–414 (GPSGSGKS) provides a ligand contact to ATP. The region spanning 679 to 971 (EWLYALLGSI…TLALTPDIVK (293 aa)) is the ABC transmembrane type-1 2 domain. 2 helical membrane-spanning segments follow: residues 680–700 (WLYALLGSIGAVLAGSQPALF) and 727–747 (AIIFVGAGIVTAPIYILQHYF). Asparagine 780 is a glycosylation site (N-linked (GlcNAc...) asparagine). 3 consecutive transmembrane segments (helical) span residues 807-824 (IVQNLSLTITALALAFFY), 830-850 (AVVTACFPLLIAASLTEQLFL), and 915-935 (LSQCLAFCSYALGLWYISVLI). Asparagine 938 is a glycosylation site (N-linked (GlcNAc...) asparagine). Residues 949 to 969 (FMVLLVTAYSVAETLALTPDI) traverse the membrane as a helical segment. The region spanning 1006–1242 (IEFRNVSFAY…SDGFYKKLTS (237 aa)) is the ABC transporter 2 domain. Asparagine 1010 carries an N-linked (GlcNAc...) asparagine glycan. 1041 to 1048 (GPSGSGKS) contacts ATP. A glycan (N-linked (GlcNAc...) asparagine) is linked at asparagine 1108.

This sequence belongs to the ABC transporter superfamily. ABCB family. Multidrug resistance exporter (TC 3.A.1.201) subfamily.

It is found in the membrane. This chain is ABC transporter B family member 14 (ABCB14), found in Arabidopsis thaliana (Mouse-ear cress).